We begin with the raw amino-acid sequence, 265 residues long: Undecaprenyl-diphosphatase (265 aa).

Helical transmembrane passes span 42-62 (AATFDVVIQLGAIMAVVVLYW), 82-102 (GIVLLMLTSLPACILGLLLHA), 108-128 (LFRPATVLIALVVGAICMILV), 157-177 (LALWPGFSRSAATIMGGMLLG), 181-201 (PLAAEYSFIAAVPIMVAATGY), 217-237 (FFLVGMIGSFVSALLAVKVFV), and 244-264 (TLIPFACYRLLIAPFVYYFMV).

It belongs to the UppP family.

Its subcellular location is the cell inner membrane. It carries out the reaction di-trans,octa-cis-undecaprenyl diphosphate + H2O = di-trans,octa-cis-undecaprenyl phosphate + phosphate + H(+). Its function is as follows. Catalyzes the dephosphorylation of undecaprenyl diphosphate (UPP). Confers resistance to bacitracin. This is Undecaprenyl-diphosphatase from Desulfovibrio desulfuricans (strain ATCC 27774 / DSM 6949 / MB).